The primary structure comprises 206 residues: Sclerostin domain-containing protein 1 (206 aa).

An N-terminal signal peptide occupies residues 1–23 (MLPPAIHLSLIPLLCILMRNCLA). Positions 42-62 (AHPSSNSTLNQARNGGRHFSS) are disordered. Positions 44–62 (PSSNSTLNQARNGGRHFSS) are enriched in polar residues. A glycan (N-linked (GlcNAc...) asparagine) is linked at Asn-47. Cystine bridges form between Cys-75–Cys-133, Cys-89–Cys-147, Cys-100–Cys-163, and Cys-104–Cys-165. Positions 75-170 (CRELRSTKYI…TACKCKRYTR (96 aa)) constitute a CTCK domain. Asn-173 carries an N-linked (GlcNAc...) asparagine glycan. The tract at residues 176–206 (SHNFESVSPAKPAQHHRERKRASKSSKHSLS) is disordered. A compositionally biased stretch (basic residues) spans 188-206 (AQHHRERKRASKSSKHSLS).

This sequence belongs to the sclerostin family. Interacts with BMP2, BMP4, BMP6 and BMP7 with high affinity. As to expression, highly expressed in kidney at renal collecting ducts level and weakly in brain.

Its subcellular location is the secreted. Its function is as follows. May be involved in the onset of endometrial receptivity for implantation/sensitization for the decidual cell reaction. Enhances Wnt signaling and inhibits TGF-beta signaling. Directly antagonizes activity of BMP2, BMP4, BMP6 and BMP7 in a dose-dependent manner. This is Sclerostin domain-containing protein 1 (Sostdc1) from Mus musculus (Mouse).